The sequence spans 192 residues: NADH-quinone oxidoreductase subunit B (192 aa).

[4Fe-4S] cluster is bound by residues Cys71, Cys72, Cys136, and Cys166.

It belongs to the complex I 20 kDa subunit family. In terms of assembly, NDH-1 is composed of 14 different subunits. Subunits NuoB, C, D, E, F, and G constitute the peripheral sector of the complex. Requires [4Fe-4S] cluster as cofactor.

It localises to the cell inner membrane. It carries out the reaction a quinone + NADH + 5 H(+)(in) = a quinol + NAD(+) + 4 H(+)(out). Its function is as follows. NDH-1 shuttles electrons from NADH, via FMN and iron-sulfur (Fe-S) centers, to quinones in the respiratory chain. Couples the redox reaction to proton translocation (for every two electrons transferred, four hydrogen ions are translocated across the cytoplasmic membrane), and thus conserves the redox energy in a proton gradient. This chain is NADH-quinone oxidoreductase subunit B, found in Azorhizobium caulinodans (strain ATCC 43989 / DSM 5975 / JCM 20966 / LMG 6465 / NBRC 14845 / NCIMB 13405 / ORS 571).